Reading from the N-terminus, the 85-residue chain is MQTVIFGRSGCPYCVRAKDLAEKLSNERDDFQYQYVDIRAEGITKEDLQQKAGKPVETVPQIFVDQQHIGGYTDFAAWVKENLDA.

A Glutaredoxin domain is found at M1–A85. An intrachain disulfide couples C11 to C14.

Belongs to the glutaredoxin family. In terms of assembly, monomer.

Its function is as follows. The disulfide bond functions as an electron carrier in the glutathione-dependent synthesis of deoxyribonucleotides by the enzyme ribonucleotide reductase. In addition, it is also involved in reducing some disulfides in a coupled system with glutathione reductase. The protein is Glutaredoxin 1 (grxA) of Shigella flexneri.